Reading from the N-terminus, the 140-residue chain is 3-hydroxyacyl-[acyl-carrier-protein] dehydratase FabZ (140 aa).

His47 is an active-site residue.

The protein belongs to the thioester dehydratase family. FabZ subfamily.

It is found in the cytoplasm. It catalyses the reaction a (3R)-hydroxyacyl-[ACP] = a (2E)-enoyl-[ACP] + H2O. Involved in unsaturated fatty acids biosynthesis. Catalyzes the dehydration of short chain beta-hydroxyacyl-ACPs and long chain saturated and unsaturated beta-hydroxyacyl-ACPs. This Streptococcus sanguinis (strain SK36) protein is 3-hydroxyacyl-[acyl-carrier-protein] dehydratase FabZ.